A 515-amino-acid chain; its full sequence is FADH(2)-dependent monooxygenase TftD (515 aa).

100 to 104 provides a ligand contact to substrate; it reads RLPDA. FAD-binding positions include 151-153, 157-160, and Thr-192; these read LNF and QTDR. 203–204 provides a ligand contact to substrate; it reads GC. 457–460 provides a ligand contact to FAD; sequence TMTR.

This sequence belongs to the FADH(2)-utilizing monooxygenase family. In terms of assembly, homotetramer. The chlorophenol-4-monooxygenase is composed of an oxygenase component TftD and a reductase component TftC.

It functions in the pathway xenobiotic degradation. Its function is as follows. Oxygenase component of a two-component system that degrades 2,4,5-trichlorophenol. Uses FADH(2) supplied by TftC to oxidize 2,4,5-trichlorophenol (2,4,5-TCP) to 2,5-dichloro-p-benzoquinone, which is chemically reduced to 2,5-dichloro-p-hydroquinone (2,5-DiCHQ). Then, TftD oxidizes the latter to 5-chloro-2-hydroxy-p-benzoquinone. The protein is FADH(2)-dependent monooxygenase TftD (tftD) of Burkholderia cepacia (Pseudomonas cepacia).